Reading from the N-terminus, the 168-residue chain is Regulatory protein RecX (168 aa).

This sequence belongs to the RecX family.

Its subcellular location is the cytoplasm. Its function is as follows. Modulates RecA activity. The chain is Regulatory protein RecX from Serratia proteamaculans (strain 568).